We begin with the raw amino-acid sequence, 89 residues long: Small ribosomal subunit protein uS15 (89 aa).

The protein belongs to the universal ribosomal protein uS15 family. In terms of assembly, part of the 30S ribosomal subunit. Forms a bridge to the 50S subunit in the 70S ribosome, contacting the 23S rRNA.

One of the primary rRNA binding proteins, it binds directly to 16S rRNA where it helps nucleate assembly of the platform of the 30S subunit by binding and bridging several RNA helices of the 16S rRNA. Its function is as follows. Forms an intersubunit bridge (bridge B4) with the 23S rRNA of the 50S subunit in the ribosome. The polypeptide is Small ribosomal subunit protein uS15 (Hyphomonas neptunium (strain ATCC 15444)).